The following is a 954-amino-acid chain: MKSEVSSDAPKRQENLKGVLLNPEAIGASKSFPKEVEMIASKVSNEFSHLCSDTNKQQRDLNSNGTEQEKNLVVHKKRKNQQAGTSYAQSCEVKENQRLLRLQPQSDEDNDSSFSDCISSPSSSSHFGDSDTMTSDEDKDNPRRYSPAGVNATPRTQSARAQKWPRPHTDSVSSLVMKRPCYQVSSLRRPLHRKRFVKNVSSQRTQKQKERMMLQRKKREVLARQKYALLPSSSSSSENDLSSESSSSSSTEGEEDLFVSPGENHQDGTTLPSGGMDEDVVVIEASSTPQVTANEEINVTSTDSEVEIVTVGETYRSRTTLGHPRSHWGQNTQSGRTQEQRTRNRVSTVIQPLRQNTTEVVDLTVDEDDPTVVPTTSGRVESQPVSTVSSNTSTSEPASDSASGPLGSRGSAIPEIPPIPPNSNTVGTIADDSRTSTSGTNVDGGPPAMPRLPSCCPQHSPCGGSSQNHVLGHPHSSCFPPHSHHFPHHHHHHHQSSHPGVPLSPSFRDSHCPVERNAAVPPPCGATSSSGSTYHDPQALPVDLSNNGIRSHGSVSFHSTSAFDPCCPGSSSRSTVYGHQSTTSTAQTMAIDGYGSSMVAQAQPPPPTPLSSCRHYMHAPYTSLTRPLHHQTSSCPHSHSNVGDYVIAHQVPFISPLPSLAATHAVPPPPPSHHLSTAAAPQHLSTSHQSMSHHISATAPATQRLHTHEVIQRMEVQRRRMMQHPTRAHERPPPHPHRMHPNYGHGHHIHVPQTMSSHPRQGPERSAWEIAIETGVTAAPYQTGPLHTHLAHYHAPPRLHHLQIGALPLMVPDMAGYPHIRYISSGLDGRSFRVPFRGNFEELIHLEERLGNVNRGASQGTIERCTYPHKYEKVSTDWFSQRKLHSKQDGEEATEEDTEEKCTICLSILEEGEDVRRLPCMHLFHQVCVDQWLITNKKCPICRVDIDTQLPTES.

A compositionally biased stretch (polar residues) spans 50–66 (LCSDTNKQQRDLNSNGT). Disordered stretches follow at residues 50-175 (LCSD…VSSL) and 193-276 (RKRF…SGGM). Composition is skewed to low complexity over residues 112–131 (SSFS…GDSD) and 232–251 (SSSS…SSST). The short motif at 280-284 (VVVIE) is the SUMO interaction motif 1 (SIM) element. Residues 305-311 (EVEIVTV) carry the SUMO interaction motif 2 (SIM) motif. Disordered regions lie at residues 318–346 (RTTL…RNRV), 364–452 (TVDE…MPRL), and 485–509 (HFPH…SFRD). The segment covering 328–337 (WGQNTQSGRT) has biased composition (polar residues). The SUMO interaction motif 3 (SIM) signature appears at 360 to 364 (VVDLT). Residues 385–395 (VSTVSSNTSTS) are compositionally biased toward low complexity. Residues 485 to 496 (HFPHHHHHHHQS) are compositionally biased toward basic residues. A ubiquitin binding region spans residues 867-869 (YPH). Residues C902 and C905 each coordinate Zn(2+). The RING-type; atypical zinc finger occupies 902 to 943 (CTICLSILEEGEDVRRLPCMHLFHQVCVDQWLITNKKCPICR). A ubiquitin binding region spans residues 917–921 (RLPCM). The Zn(2+) site is built by H925 and C928.

It belongs to the Arkadia family. In terms of assembly, monomer.

The protein resides in the nucleus. It localises to the cytoplasm. The protein localises to the PML body. It carries out the reaction S-ubiquitinyl-[E2 ubiquitin-conjugating enzyme]-L-cysteine + [acceptor protein]-L-lysine = [E2 ubiquitin-conjugating enzyme]-L-cysteine + N(6)-ubiquitinyl-[acceptor protein]-L-lysine.. Its pathway is protein modification; protein ubiquitination. With respect to regulation, binds free ubiquitin non-covalently via its RING-type zinc finger. Ubiquitin-binding leads to enhance the E3 ubiquitin-protein ligase activity by stabilizing the ubiquitin-conjugating enzyme E2 (donor ubiquitin) in the 'closed' conformation and activating ubiquitin transfer. Its function is as follows. E3 ubiquitin-protein ligase required for mesoderm patterning during embryonic development. Acts as an enhancer of the transcriptional responses of the smad2/smad3 effectors, which are activated downstream of BMP. Acts by mediating ubiquitination and degradation of SMAD inhibitors such as smad7, inducing their proteasomal degradation and thereby enhancing the transcriptional activity of TGF-beta and BMP. Specifically binds polysumoylated chains via SUMO interaction motifs (SIMs) and mediates ubiquitination of sumoylated substrates. The regulation of the BMP-SMAD signaling is however independent of sumoylation and is not dependent of SUMO interaction motifs (SIMs). In Xenopus tropicalis (Western clawed frog), this protein is E3 ubiquitin-protein ligase arkadia (rnf111).